A 526-amino-acid chain; its full sequence is ATP synthase subunit alpha (526 aa).

174 to 181 (GDRKTGKT) lines the ATP pocket. A compositionally biased stretch (basic and acidic residues) spans 505–520 (FEPARSEVKVETRPQE). The disordered stretch occupies residues 505-526 (FEPARSEVKVETRPQEEEGEEG).

Belongs to the ATPase alpha/beta chains family. As to quaternary structure, F-type ATPases have 2 components, CF(1) - the catalytic core - and CF(0) - the membrane proton channel. CF(1) has five subunits: alpha(3), beta(3), gamma(1), delta(1), epsilon(1). CF(0) has three main subunits: a(1), b(2) and c(9-12). The alpha and beta chains form an alternating ring which encloses part of the gamma chain. CF(1) is attached to CF(0) by a central stalk formed by the gamma and epsilon chains, while a peripheral stalk is formed by the delta and b chains.

It is found in the cell membrane. It catalyses the reaction ATP + H2O + 4 H(+)(in) = ADP + phosphate + 5 H(+)(out). Produces ATP from ADP in the presence of a proton gradient across the membrane. The alpha chain is a regulatory subunit. The polypeptide is ATP synthase subunit alpha (Rubrobacter xylanophilus (strain DSM 9941 / JCM 11954 / NBRC 16129 / PRD-1)).